Consider the following 242-residue polypeptide: tRNA1(Val) (adenine(37)-N6)-methyltransferase (242 aa).

Belongs to the methyltransferase superfamily. tRNA (adenine-N(6)-)-methyltransferase family.

The protein localises to the cytoplasm. The catalysed reaction is adenosine(37) in tRNA1(Val) + S-adenosyl-L-methionine = N(6)-methyladenosine(37) in tRNA1(Val) + S-adenosyl-L-homocysteine + H(+). In terms of biological role, specifically methylates the adenine in position 37 of tRNA(1)(Val) (anticodon cmo5UAC). This Mannheimia succiniciproducens (strain KCTC 0769BP / MBEL55E) protein is tRNA1(Val) (adenine(37)-N6)-methyltransferase.